A 156-amino-acid polypeptide reads, in one-letter code: MKQSLGLLEVSGLALAISCADVMAKAASITLVGLEKTNGSGWMVIKIIGDVASVQAAISTGVSFADQRDGLVAHKVISRPGDGILSHSVTPESESEPAPAPTPVVPHEEIPEDHAAPEAPQDAELISCNLCLDPACPRQKGEPRSLCLHSGKRGEA.

A BMC domain is found at 4 to 89 (SLGLLEVSGL…PGDGILSHSV (86 aa)). The segment at 81 to 119 (GDGILSHSVTPESESEPAPAPTPVVPHEEIPEDHAAPEA) is disordered. Residues 106 to 116 (PHEEIPEDHAA) show a composition bias toward basic and acidic residues.

It belongs to the bacterial microcompartments protein family. In terms of assembly, interacts with shell protein PduA and assembly protein PduM. Interacts with PduP, probably with its first 18 residues. Fe cation serves as cofactor.

It localises to the bacterial microcompartment. It functions in the pathway polyol metabolism; 1,2-propanediol degradation. In terms of biological role, a minor shell protein of the bacterial microcompartment (BMC) dedicated to 1,2-propanediol (1,2-PD) degradation. Expression of a cosmid containing the full 21-gene pdu operon in E.coli allows E.coli to grow on 1,2-propanediol (1,2-PD) with the appearance of bacterial microcompartments (BMC) in its cytoplasm. Overexpression of this protein leads to the appearance of a single large aggregate complex in the cytoplasm. Functionally, the 1,2-PD-specific bacterial microcompartment (BMC) concentrates low levels of 1,2-PD catabolic enzymes, concentrates volatile reaction intermediates thus enhancing pathway flux and keeps the level of toxic, mutagenic propionaldehyde low. This Citrobacter freundii protein is Bacterial microcompartment shell protein PduK.